The chain runs to 373 residues: T-protein (373 aa).

Residues 1 to 90 (MVAELTALRD…ESYSSENDKG (90 aa)) form the Chorismate mutase domain. The Prephenate/arogenate dehydrogenase domain occupies 99-361 (RPVVIVGGGG…DYAQRFQSES (263 aa)).

The protein in the C-terminal section; belongs to the prephenate/arogenate dehydrogenase family.

It localises to the cytoplasm. It catalyses the reaction chorismate = prephenate. The enzyme catalyses prephenate + NAD(+) = 3-(4-hydroxyphenyl)pyruvate + CO2 + NADH. It participates in amino-acid biosynthesis; L-tyrosine biosynthesis; (4-hydroxyphenyl)pyruvate from prephenate (NAD(+) route): step 1/1. The protein operates within metabolic intermediate biosynthesis; prephenate biosynthesis; prephenate from chorismate: step 1/1. This chain is T-protein (tyrA), found in Escherichia coli (strain K12).